A 956-amino-acid chain; its full sequence is Netrin receptor UNC5D (956 aa).

A signal peptide spans 1–30 (MGTGAADRSRGARWWLPWLGLCFWAAGAEA). The Extracellular portion of the chain corresponds to 31–382 (ARGADSGEVL…SRRGIENASD (352 aa)). Residues 52–149 (PHFIEEPEDA…LGTSKSRKAS (98 aa)) enclose the Ig-like domain. 9 disulfides stabilise this stretch: Cys-73-Cys-134, Cys-85-Cys-132, Cys-178-Cys-229, Cys-262-Cys-299, Cys-266-Cys-303, Cys-277-Cys-289, Cys-318-Cys-352, Cys-322-Cys-357, and Cys-330-Cys-342. The important for interaction with FLRT2 stretch occupies residues 89-91 (WVH). N-linked (GlcNAc...) asparagine glycosylation is found at Asn-115 and Asn-226. Positions 164–242 (QGREVPIEGM…NIVAKRRSLS (79 aa)) constitute an Ig-like C2-type domain. TSP type-1 domains are found at residues 250–304 (NGGW…ALCP) and 306–358 (DGSW…GLCI). The helical transmembrane segment at 383–403 (IALYSGLGAAVVAVAVLVIGV) threads the bilayer. The Cytoplasmic portion of the chain corresponds to 404–956 (TLYRRSHSDY…DFNYSRQNGL (553 aa)). The 141-residue stretch at 545–685 (LRTTGVFGHL…FGTYALTGEP (141 aa)) folds into the ZU5 domain. The region spanning 862–939 (QRICATFDTP…RTHTKLSNIT (78 aa)) is the Death domain.

It belongs to the unc-5 family. In terms of assembly, interacts (via extracellular domain) with FLRT2 and FLRT3 (via extracellular domain); the interaction is direct. Has higher affinity for FLRT2. Identified in a complex with FLRT3 and ADGRL3; does not interact with ADGRL3 by itself. Proteolytically cleaved by caspases during apoptosis. The cleavage does not take place when the receptor is associated with netrin ligand. Its cleavage by caspases is required to induce apoptosis.

The protein resides in the cell membrane. Receptor for the netrin NTN4 that promotes neuronal cell survival. Plays a role in cell-cell adhesion and cell guidance. Receptor for netrin involved in cell migration. Plays a role in axon guidance by mediating axon repulsion of neuronal growth cones in the developing nervous system upon ligand binding. May play a role in apoptosis in response to DNA damage. It also acts as a dependence receptor required for apoptosis induction when not associated with netrin ligand. Mediates cell-cell adhesion via its interaction with FLRT3 on an adjacent cell. This Rattus norvegicus (Rat) protein is Netrin receptor UNC5D.